The chain runs to 412 residues: Subtilisin-like protease 6 (412 aa).

Positions 1 to 20 (MGFITKAIPIVLAALSTVNG) are cleaved as a signal peptide. A propeptide spanning residues 21 to 126 (ARILEAGPHA…VVRTTTNGTN (106 aa)) is cleaved from the precursor. Residues 36–120 (KYIVVMKREV…FIEPDFVVRT (85 aa)) form the Inhibitor I9 domain. 2 N-linked (GlcNAc...) asparagine glycosylation sites follow: asparagine 123 and asparagine 126. Residues 135-412 (SWGLARVGSK…GKLIYNGSGK (278 aa)) enclose the Peptidase S8 domain. Residues aspartate 167 and histidine 198 each act as charge relay system in the active site. 2 N-linked (GlcNAc...) asparagine glycosylation sites follow: asparagine 252 and asparagine 264. The active-site Charge relay system is the serine 358. An N-linked (GlcNAc...) asparagine glycan is attached at asparagine 408.

This sequence belongs to the peptidase S8 family.

Its subcellular location is the secreted. Functionally, secreted subtilisin-like serine protease with keratinolytic activity that contributes to pathogenicity. The polypeptide is Subtilisin-like protease 6 (SUB6) (Trichophyton rubrum (Athlete's foot fungus)).